The primary structure comprises 416 residues: Lysosome-associated membrane glycoprotein 3 (416 aa).

Positions 1–27 (MPRQLSAAAVLFASLAVILHDGSQMRA) are cleaved as a signal peptide. The Lumenal portion of the chain corresponds to 28-381 (KAFPKTRDYS…NVDECSSDYT (354 aa)). Residues 135–217 (PPTITPPAHT…ASTVPGSTLA (83 aa)) are disordered. Polar residues predominate over residues 142 to 170 (AHTTGTSSSTVNHTTGNATQPSNQTTLPA). The span at 188 to 208 (PTHAPGTTAAAHNTTRTAAPA) shows a compositional bias: low complexity. N-linked (GlcNAc...) asparagine glycosylation occurs at asparagine 200. Cysteines 237 and 274 form a disulfide. A glycan (N-linked (GlcNAc...) asparagine) is linked at asparagine 291. Residues cysteine 339 and cysteine 376 are joined by a disulfide bond. A helical membrane pass occupies residues 382 to 402 (IVLPVIGAIVVGLCLVGMGVY). At 403–416 (KIRLRCQSSGYQRI) the chain is on the cytoplasmic side.

Belongs to the LAMP family. In terms of assembly, monomer. Interacts with FURIN.

It localises to the cell surface. The protein resides in the lysosome membrane. The protein localises to the cytoplasmic vesicle membrane. Its subcellular location is the early endosome membrane. Lysosomal membrane glycoprotein which plays a role in the unfolded protein response (UPR) that contributes to protein degradation and cell survival during proteasomal dysfunction. Plays a role in the process of fusion of the lysosome with the autophagosome, thereby modulating the autophagic process. Promotes hepatocellular lipogenesis through activation of the PI3K/Akt pathway. May also play a role in dendritic cell function and in adaptive immunity. In Macaca mulatta (Rhesus macaque), this protein is Lysosome-associated membrane glycoprotein 3 (LAMP3).